The following is a 185-amino-acid chain: Ribosome-recycling factor (185 aa).

This sequence belongs to the RRF family.

Its subcellular location is the cytoplasm. Its function is as follows. Responsible for the release of ribosomes from messenger RNA at the termination of protein biosynthesis. May increase the efficiency of translation by recycling ribosomes from one round of translation to another. This Xylella fastidiosa (strain 9a5c) protein is Ribosome-recycling factor.